Reading from the N-terminus, the 534-residue chain is Transcription factor RBF1 (534 aa).

Residues Met1–Ser36 are disordered. Residues Ala77–Leu147 are a coiled coil. 4 disordered regions span residues Ala262 to Glu285, Gln353 to Ala372, Gln402 to Leu439, and Thr477 to Leu534. Over residues Asn267–Glu285 the composition is skewed to basic and acidic residues. Residues His332–Gly386 are a coiled coil. The span at Gln402–Thr435 shows a compositional bias: low complexity.

This sequence belongs to the RBF1 family.

Its subcellular location is the nucleus. It is found in the chromosome. The protein resides in the telomere. Functionally, transcriptional activator that binds to the RPG box and to telomeres. Involved in the regulation of the transition between yeast and filamentous forms and plays a role in virulence. Induces expression of HWP1, a major hyphal cell protein and virulence factor. This chain is Transcription factor RBF1 (RBF1), found in Candida albicans (strain SC5314 / ATCC MYA-2876) (Yeast).